Here is a 217-residue protein sequence, read N- to C-terminus: Large ribosomal subunit protein uL1 (217 aa).

S2 is subject to N-acetylserine. The residue at position 11 (Y11) is a Phosphotyrosine. N6-acetyllysine is present on residues K91 and K106. K118 is subject to N6-acetyllysine; alternate. A Glycyl lysine isopeptide (Lys-Gly) (interchain with G-Cter in SUMO1); alternate cross-link involves residue K118. K118 participates in a covalent cross-link: Glycyl lysine isopeptide (Lys-Gly) (interchain with G-Cter in SUMO2); alternate. K161 participates in a covalent cross-link: Glycyl lysine isopeptide (Lys-Gly) (interchain with G-Cter in SUMO2).

This sequence belongs to the universal ribosomal protein uL1 family. In terms of assembly, component of the large ribosomal subunit.

The protein resides in the cytoplasm. Component of the large ribosomal subunit. The ribosome is a large ribonucleoprotein complex responsible for the synthesis of proteins in the cell. This chain is Large ribosomal subunit protein uL1 (Rpl10a), found in Mus musculus (Mouse).